The chain runs to 637 residues: Chaperone protein DnaK (637 aa).

Residue T198 is modified to Phosphothreonine; by autocatalysis. Positions 597-637 are disordered; the sequence is MYAKTSQAGAGPQPGAGPGTGGQGPGKKDEDVVDADFEEVK. Residues 608-621 are compositionally biased toward gly residues; it reads PQPGAGPGTGGQGP. A compositionally biased stretch (acidic residues) spans 627–637; sequence DVVDADFEEVK.

It belongs to the heat shock protein 70 family.

Its function is as follows. Acts as a chaperone. The chain is Chaperone protein DnaK from Syntrophus aciditrophicus (strain SB).